Reading from the N-terminus, the 341-residue chain is tRNA N6-adenosine threonylcarbamoyltransferase (341 aa).

Fe cation contacts are provided by His-111 and His-115. Residues 134–138 (LVSGG), Asp-167, Gly-180, and Asn-276 contribute to the substrate site. Asp-304 lines the Fe cation pocket.

The protein belongs to the KAE1 / TsaD family. The cofactor is Fe(2+).

It localises to the cytoplasm. It catalyses the reaction L-threonylcarbamoyladenylate + adenosine(37) in tRNA = N(6)-L-threonylcarbamoyladenosine(37) in tRNA + AMP + H(+). Functionally, required for the formation of a threonylcarbamoyl group on adenosine at position 37 (t(6)A37) in tRNAs that read codons beginning with adenine. Is involved in the transfer of the threonylcarbamoyl moiety of threonylcarbamoyl-AMP (TC-AMP) to the N6 group of A37, together with TsaE and TsaB. TsaD likely plays a direct catalytic role in this reaction. This is tRNA N6-adenosine threonylcarbamoyltransferase from Pseudomonas entomophila (strain L48).